A 351-amino-acid polypeptide reads, in one-letter code: DNA polymerase IV (351 aa).

The 182-residue stretch at 4–185 (IIHVDMDCFF…LPLAKIPGVG (182 aa)) folds into the UmuC domain. Mg(2+)-binding residues include D8 and D103. Residue E104 is part of the active site.

It belongs to the DNA polymerase type-Y family. In terms of assembly, monomer. Mg(2+) is required as a cofactor.

It localises to the cytoplasm. The enzyme catalyses DNA(n) + a 2'-deoxyribonucleoside 5'-triphosphate = DNA(n+1) + diphosphate. Functionally, poorly processive, error-prone DNA polymerase involved in untargeted mutagenesis. Copies undamaged DNA at stalled replication forks, which arise in vivo from mismatched or misaligned primer ends. These misaligned primers can be extended by PolIV. Exhibits no 3'-5' exonuclease (proofreading) activity. May be involved in translesional synthesis, in conjunction with the beta clamp from PolIII. The protein is DNA polymerase IV of Escherichia coli O139:H28 (strain E24377A / ETEC).